The following is a 630-amino-acid chain: Putative F-box/LRR-repeat protein At3g49150 (630 aa).

The F-box domain maps to 15-63 (KDIISDLPEALICHILSFLPIEDSALTSVLSKKWQHLFAFRPNLEFDDA). 9 LRR repeats span residues 101 to 129 (CRDFTDPTCVSRWISNVMERGVSDLDLRC), 152 to 178 (RIETGNGAFIDVEDVFLPNLKTLYLNK), 180 to 205 (LLRHSDNGFVKLITSCHVLEDLFIMN), 228 to 253 (CEDVHAVNPESVSFDTPNLVYFVYHD), 300 to 325 (ISNVQILELFANTIEVLTFCCEQIPV), 337 to 362 (DQKAGWESLPVLLKNCPDLESLIFDG), 406 to 436 (CDDYDDMEKQIELVMYFLETMPNLEEMKLFY), 437 to 465 (DTQIYEDVISKLQMDLRRTLSLRSLFNAR), and 567 to 590 (DSSIQLDFVQQIVHNVHSLTGLNW).

This Arabidopsis thaliana (Mouse-ear cress) protein is Putative F-box/LRR-repeat protein At3g49150.